The following is a 140-amino-acid chain: D-ribose pyranase (140 aa).

The active-site Proton donor is H20. Substrate-binding positions include D28, H99, and 121-123; that span reads YSS.

This sequence belongs to the RbsD / FucU family. RbsD subfamily. As to quaternary structure, homodecamer.

It is found in the cytoplasm. The catalysed reaction is beta-D-ribopyranose = beta-D-ribofuranose. It participates in carbohydrate metabolism; D-ribose degradation; D-ribose 5-phosphate from beta-D-ribopyranose: step 1/2. Its function is as follows. Catalyzes the interconversion of beta-pyran and beta-furan forms of D-ribose. The chain is D-ribose pyranase from Pseudothermotoga lettingae (strain ATCC BAA-301 / DSM 14385 / NBRC 107922 / TMO) (Thermotoga lettingae).